Consider the following 1120-residue polypeptide: MSKYSLLFNQGTKDGTNASSGSEANSANITSSSAPASSTNTSSPTSSESAVVSPPASTSPRRRLIHRRHGSAGAAEVAPLSLPKRPQQPNEEKHENFISDSVHHCSNRGASGSELKALTTSGSETVMSASPDIAFEAPSPPTASASPPLESTSAVESDGDVVIDDMMRYQEGDSGGSRSATSAAAAGRAVSTNDAAALINGDPGPLSSAVSSSSSGSPHTPPRLFTCDMCLQYVSTSYEALEQHALDQHGDALADYTRLRSVAEKLVPVWDEVLKRKASVVQQWGKRIFAVAVQRDAGAEKMAEAHRARAQLELVVQRWHPRAKVFIFGSSVAFGVWDGISDIDFTVVDVDELEAGTWPPSEKNAVRSITELLRRAGFSFINLEPISHARVPIIKHHASLPIRLTDEQRHRLYEEARQSAAAVDLVAAESLASSSPSSAQETTDEKGLTQLEAELIIARSVRYSLNLPAGPPDSAILEASIRLAVGSAAVQQVWWNRTRDMCCMTFDTTTNAVKASTCPLHFMSAGMRARVQPLHEECRPELYGMDFDLSFRAFGIRNSHLLRRYLLSHPCARPGALVLKDWSKTSGVNNSVNGYLTSYAINIMWIYYLVHRGVIRYVCPARDIPASLRCNVDADPQYAAMVDPTWTPEERAAMEAQAGELLLGFFYYYAFEFDWVNHVVSLNRPGITTKASLGWDVEDVAQTGSPAPHFGVAGSQHQYNLAGAEGQQGDLHSGTSLSAPQTRPLTGYDGMMASSASAAARRSRATTRYSFCIEDPYEENLNLGRHMGVTKTLRVQTELYRGLLSLLKDDPQHCCVFAGSTNSSGSTDSNGAMASGAAEPAMVAARTPSEPTELPVRVLYKLMAISTRELAIARRRYSATVTAGTEFPGALLSDLEAAFLAQAPTEWKLARQVWNKHQLLHRLGLKLHAREYVLPRREVGVRRLAAKAPPGVVPASAPEPTFTAEEVAAAAAESGQAPFSAEHAPTSSEEVTQMNRAFLGAFPARRLPEDLMLAMTKGYSCLTPSWVAWSKPWAALSAWWTDRLHSPSTTTQGEDPLASGTCEQGGVSPSLPTGAPHHISAVPEKSAGAMHQTRTQLRRHVVAEIASTPAARRVLRLLFR.

Disordered stretches follow at residues 1–156 (MSKY…SAVE) and 196–221 (AALINGDPGPLSSAVSSSSSGSPHTP). The segment covering 7 to 16 (LFNQGTKDGT) has biased composition (polar residues). The span at 17–59 (NASSGSEANSANITSSSAPASSTNTSSPTSSESAVVSPPASTS) shows a compositional bias: low complexity. The segment covering 60-70 (PRRRLIHRRHG) has biased composition (basic residues). Residues 90 to 103 (NEEKHENFISDSVH) show a composition bias toward basic and acidic residues. Over residues 118 to 128 (LTTSGSETVMS) the composition is skewed to polar residues. 2 stretches are compositionally biased toward low complexity: residues 134–154 (AFEAPSPPTASASPPLESTSA) and 207–217 (SSAVSSSSSGS). The C2H2-type; atypical zinc finger occupies 222–253 (PRLFTCDMCLQYVSTSYEALEQHALDQHGDAL). Zn(2+) contacts are provided by Cys-227, Cys-230, His-244, and His-249. Residues Ser-330 and 341–344 (SDID) contribute to the UTP site. Positions 342 and 344 each coordinate Mg(2+). Arg-390 contacts RNA. Asp-548 lines the Mg(2+) pocket. UTP-binding positions include 555-559 (GIRNS), Lys-580, Lys-584, and 598-599 (SY). Residues 659–697 (GELLLGFFYYYAFEFDWVNHVVSLNRPGITTKASLGWDV) enclose the PAP-associated domain. An important for catalytic activity and RNA binding region spans residues 750–1120 (GMMASSASAA…ARRVLRLLFR (371 aa)). Residues 773-782 (IEDPYEENLN) carry the Nucleotide recognition motif (NRM) motif. An involved in oligomerization region spans residues 800 to 900 (YRGLLSLLKD…LLSDLEAAFL (101 aa)). Positions 1047 to 1076 (PSTTTQGEDPLASGTCEQGGVSPSLPTGAP) are disordered.

This sequence belongs to the DNA polymerase type-B-like family. Homotetramer. Part of a 700kDa complex. Interacts with p45 and p50 RNA ligases. Requires Mg(2+) as cofactor. Mn(2+) serves as cofactor.

The protein localises to the mitochondrion. It catalyses the reaction RNA(n) + UTP = RNA(n)-3'-uridine ribonucleotide + diphosphate. Its activity is regulated as follows. Zinc-binding is required for catalytic activity. Functionally, terminal uridylyltransferase which is involved in the post-transcriptional editing of mitochondrial RNA, a process involving the addition and deletion of uridine (U) nucleotides in the pre-mRNA. Specifically, catalyzes the addition of Us to the 3'-hydroxyl group of guided RNA (gRNA), with a preference for RNAs terminating in 6 Us, but also can add Us to RNAs terminating in 6 adenines (A), 6 cytosines (C), or 6 guanines (G). Can mediate RNA-independent UTP polymerization in vitro. Can mediate pyrophosphate-dependent degradation of synthetic RNA ending with U residues in vitro. The sequence is that of Terminal uridylyltransferase 1 from Leishmania tarentolae (Sauroleishmania tarentolae).